Consider the following 90-residue polypeptide: uncharacterized protein (90 aa).

This is an uncharacterized protein from Escherichia coli (strain K12).